The following is a 371-amino-acid chain: Peptidyl-prolyl cis-trans isomerase D (371 aa).

Residues 11–172 (FFDIQIGNEK…KDVTIVECGE (162 aa)) enclose the PPIase cyclophilin-type domain. Positions 175–195 (GQDYDDADKQTPDATGDPYED) are disordered. TPR repeat units follow at residues 214–247 (ASELKNFGNAAFKSGNLALGLEKYQKGLRYLHEF), 267–300 (FALHSNSSLLANKLAQYGNGRSWATYALDTANAA), and 308–341 (AKAYYRRAVASSGLKEEDEALKDLQEAEKLAPGD).

This sequence belongs to the cyclophilin-type PPIase family. PPIase D subfamily.

The protein resides in the cytoplasm. It carries out the reaction [protein]-peptidylproline (omega=180) = [protein]-peptidylproline (omega=0). PPIases accelerate the folding of proteins. It catalyzes the cis-trans isomerization of proline imidic peptide bonds in oligopeptides. This Aspergillus oryzae (strain ATCC 42149 / RIB 40) (Yellow koji mold) protein is Peptidyl-prolyl cis-trans isomerase D (cpr6).